Here is a 494-residue protein sequence, read N- to C-terminus: DnaJ homolog subfamily C member 7 (494 aa).

A2 carries the N-acetylalanine modification. TPR repeat units lie at residues 28–61 (AETF…CPKN), 62–95 (ASYY…DDSF), 96–129 (VRGH…DHKN), 142–175 (VMEY…APAC), 177–209 (RFKI…DSTN), 210–243 (ADAL…APDH), 256–289 (LKAK…DPNN), 294–327 (AKLY…DDTY), and 328–361 (IKAY…EKTK). The J domain occupies 381-451 (DYYKILGVDK…KKKTRYDSGQ (71 aa)). Residue S393 is modified to Phosphoserine.

As to quaternary structure, associates with complexes containing chaperones HSP70 and HSP90. Interacts with the GAP domain of NF1. Interacts with HSP90AA1. Interacts with HSPA1A/B; the interaction is enhanced by ATP. Interacts with HSP90AB1. Interacts with PGR. Interacts with RAD9A; the interaction is interrupted by UV and heat shock treatments. Interacts with HUS1 and RAD1. Interacts with NR1I3. The DNAJC7-NR1I3 complex may also include HSP90. Interacts with HSPA8.

Its subcellular location is the cytoplasm. It is found in the nucleus. The protein localises to the cytoskeleton. Acts as a co-chaperone regulating the molecular chaperones HSP70 and HSP90 in folding of steroid receptors, such as the glucocorticoid receptor and the progesterone receptor. Proposed to act as a recycling chaperone by facilitating the return of chaperone substrates to early stages of chaperoning if further folding is required. In vitro, induces ATP-independent dissociation of HSP90 but not of HSP70 from the chaperone-substrate complexes. Recruits NR1I3 to the cytoplasm. This Homo sapiens (Human) protein is DnaJ homolog subfamily C member 7 (DNAJC7).